A 216-amino-acid polypeptide reads, in one-letter code: Peptide methionine sulfoxide reductase MsrA (216 aa).

C54 is a catalytic residue.

It belongs to the MsrA Met sulfoxide reductase family.

It carries out the reaction L-methionyl-[protein] + [thioredoxin]-disulfide + H2O = L-methionyl-(S)-S-oxide-[protein] + [thioredoxin]-dithiol. The catalysed reaction is [thioredoxin]-disulfide + L-methionine + H2O = L-methionine (S)-S-oxide + [thioredoxin]-dithiol. Has an important function as a repair enzyme for proteins that have been inactivated by oxidation. Catalyzes the reversible oxidation-reduction of methionine sulfoxide in proteins to methionine. The polypeptide is Peptide methionine sulfoxide reductase MsrA (Xylella fastidiosa (strain Temecula1 / ATCC 700964)).